Consider the following 132-residue polypeptide: Small ribosomal subunit protein uS8 (132 aa).

This sequence belongs to the universal ribosomal protein uS8 family. In terms of assembly, part of the 30S ribosomal subunit. Contacts proteins S5 and S12.

In terms of biological role, one of the primary rRNA binding proteins, it binds directly to 16S rRNA central domain where it helps coordinate assembly of the platform of the 30S subunit. The polypeptide is Small ribosomal subunit protein uS8 (Lysinibacillus sphaericus (strain C3-41)).